Reading from the N-terminus, the 365-residue chain is DNA replication and repair protein RecF (365 aa).

ATP is bound at residue 30-37 (GRNAQGKT).

This sequence belongs to the RecF family.

The protein localises to the cytoplasm. Its function is as follows. The RecF protein is involved in DNA metabolism; it is required for DNA replication and normal SOS inducibility. RecF binds preferentially to single-stranded, linear DNA. It also seems to bind ATP. The protein is DNA replication and repair protein RecF of Streptococcus pneumoniae serotype 2 (strain D39 / NCTC 7466).